A 62-amino-acid chain; its full sequence is Sperm protamine P1 (62 aa).

The disordered stretch occupies residues 1–62 (MARYRHSRSR…RYSRRGRRRY (62 aa)).

The protein belongs to the protamine P1 family. In terms of tissue distribution, testis.

The protein localises to the nucleus. It is found in the chromosome. Protamines substitute for histones in the chromatin of sperm during the haploid phase of spermatogenesis. They compact sperm DNA into a highly condensed, stable and inactive complex. The sequence is that of Sperm protamine P1 (PRM1) from Trichosurus vulpecula (Brush-tailed possum).